We begin with the raw amino-acid sequence, 125 residues long: uncharacterized protein (125 aa).

2 helical membrane passes run 28–48 and 54–74; these read VFIT…SQFC and FFLP…LFFF.

Its subcellular location is the membrane. This is an uncharacterized protein from Saccharomyces cerevisiae (strain ATCC 204508 / S288c) (Baker's yeast).